Consider the following 189-residue polypeptide: Ornithine decarboxylase antizyme 2 (189 aa).

The residue at position 186 (Ser186) is a Phosphoserine.

The protein belongs to the ODC antizyme family. Interacts with ODC1 and thereby sterically blocks ODC homodimerization. Interacts with AZIN2; this interaction disrupts the interaction between the antizyme and ODC1.

It localises to the nucleus. In terms of biological role, ornithine decarboxylase (ODC) antizyme protein that negatively regulates ODC activity and intracellular polyamine biosynthesis and uptake in response to increased intracellular polyamine levels. Binds to ODC monomers, inhibiting the assembly of the functional ODC homodimers. Does not target the ODC monomers for degradation, which allows a protein synthesis-independent restoration of ODC activity. Involved in the translocation of AZIN2 from ER-Golgi intermediate compartment (ERGIC) to the cytosol. The protein is Ornithine decarboxylase antizyme 2 (Oaz2) of Mus musculus (Mouse).